Consider the following 162-residue polypeptide: MARVEL domain-containing protein 1 (162 aa).

The Cytoplasmic portion of the chain corresponds to 1 to 17 (MPTQPQEKRSFLQFLKS). Residues 14–155 (FLKSFVGIVR…SGIYCSCRKC (142 aa)) form the MARVEL domain. The chain crosses the membrane as a helical span at residues 18 to 38 (FVGIVRVLQILLGAGLWVTIA). Residues 39–47 (ANKYEGSIH) are Extracellular-facing. Residues 48 to 68 (FVLFVAVLFWLLTLAIFILTL) form a helical membrane-spanning segment. The Cytoplasmic portion of the chain corresponds to 69–86 (LDKQDLVPIVGGERWLLS). A helical transmembrane segment spans residues 87-107 (NLIHDVVATLLYLSTIGIMIY). Over 108–127 (KTQKNSYCNLDVYKHHCLYK) the chain is Extracellular. The helical transmembrane segment at 128–148 (VYLTASVFACLTAAVYLLSGI) threads the bilayer. At 149–162 (YCSCRKCRGERTVV) the chain is on the cytoplasmic side.

The protein localises to the membrane. It localises to the nucleus. The protein is MARVEL domain-containing protein 1 (marveld1) of Danio rerio (Zebrafish).